The primary structure comprises 96 residues: uncharacterized protein (96 aa).

The protein belongs to the mulikevirus gp14 protein family.

The protein localises to the host cytoplasm. This is an uncharacterized protein from Escherichia coli (Bacteriophage D108).